The primary structure comprises 446 residues: Phosphoglucosamine mutase (446 aa).

The active-site Phosphoserine intermediate is Ser-88. Positions 88, 231, 233, and 235 each coordinate Mg(2+). At Ser-88 the chain carries Phosphoserine.

Belongs to the phosphohexose mutase family. Mg(2+) serves as cofactor. In terms of processing, activated by phosphorylation.

It carries out the reaction alpha-D-glucosamine 1-phosphate = D-glucosamine 6-phosphate. Its function is as follows. Catalyzes the conversion of glucosamine-6-phosphate to glucosamine-1-phosphate. The chain is Phosphoglucosamine mutase from Methanococcus vannielii (strain ATCC 35089 / DSM 1224 / JCM 13029 / OCM 148 / SB).